A 105-amino-acid polypeptide reads, in one-letter code: Large ribosomal subunit protein uL24 (105 aa).

The protein belongs to the universal ribosomal protein uL24 family. As to quaternary structure, part of the 50S ribosomal subunit.

One of two assembly initiator proteins, it binds directly to the 5'-end of the 23S rRNA, where it nucleates assembly of the 50S subunit. Its function is as follows. One of the proteins that surrounds the polypeptide exit tunnel on the outside of the subunit. The chain is Large ribosomal subunit protein uL24 from Mycobacterium avium (strain 104).